Consider the following 155-residue polypeptide: Large ribosomal subunit protein uL22 (155 aa).

The protein belongs to the universal ribosomal protein uL22 family. As to quaternary structure, part of the 50S ribosomal subunit.

In terms of biological role, this protein binds specifically to 23S rRNA. It makes multiple contacts with different domains of the 23S rRNA in the assembled 50S subunit and ribosome. The globular domain of the protein is located near the polypeptide exit tunnel on the outside of the subunit, while an extended beta-hairpin is found that lines the wall of the exit tunnel in the center of the 70S ribosome. This chain is Large ribosomal subunit protein uL22, found in Pyrococcus furiosus (strain ATCC 43587 / DSM 3638 / JCM 8422 / Vc1).